The sequence spans 131 residues: MSEIPGDLKFLKSHEWARIESNGRVTVGISDHAQGLLGDLVYVELPGVGDTVQVGNGAAVVESVKAASDVYSPVSGTVVEVNSALSDKPETINEDAYGEGWIFVVEIDDKEQLNDLLDPDDYAELLEDDEH.

Residues 24-106 (RVTVGISDHA…YGEGWIFVVE (83 aa)) form the Lipoyl-binding domain. K65 carries the N6-lipoyllysine modification.

This sequence belongs to the GcvH family. In terms of assembly, the glycine cleavage system is composed of four proteins: P, T, L and H. The cofactor is (R)-lipoate.

Its function is as follows. The glycine cleavage system catalyzes the degradation of glycine. The H protein shuttles the methylamine group of glycine from the P protein to the T protein. The chain is Glycine cleavage system H protein from Xanthomonas oryzae pv. oryzae (strain MAFF 311018).